Consider the following 175-residue polypeptide: Bifunctional protein PyrR (175 aa).

Substrate contacts are provided by residues 40–41, Arg85, 102–110, Arg135, and Val159; these read TR and DDVLYTGRT. Positions 98 to 110 match the PRPP-binding motif; that stretch reads VIIIDDVLYTGRT.

The protein belongs to the purine/pyrimidine phosphoribosyltransferase family. PyrR subfamily. As to quaternary structure, homodimer and homohexamer; in equilibrium.

The enzyme catalyses UMP + diphosphate = 5-phospho-alpha-D-ribose 1-diphosphate + uracil. Functionally, regulates transcriptional attenuation of the pyrimidine nucleotide (pyr) operon by binding in a uridine-dependent manner to specific sites on pyr mRNA. This disrupts an antiterminator hairpin in the RNA and favors formation of a downstream transcription terminator, leading to a reduced expression of downstream genes. Also displays a weak uracil phosphoribosyltransferase activity which is not physiologically significant. This is Bifunctional protein PyrR from Staphylococcus saprophyticus subsp. saprophyticus (strain ATCC 15305 / DSM 20229 / NCIMB 8711 / NCTC 7292 / S-41).